A 257-amino-acid chain; its full sequence is Type III pantothenate kinase (257 aa).

6 to 13 (DVGNTSTK) is a binding site for ATP. Residue 109–112 (GADR) coordinates substrate. The active-site Proton acceptor is Asp111. Asp132 serves as a coordination point for K(+). Residue Thr135 participates in ATP binding. Thr187 lines the substrate pocket.

This sequence belongs to the type III pantothenate kinase family. Homodimer. NH4(+) is required as a cofactor. It depends on K(+) as a cofactor.

The protein localises to the cytoplasm. It carries out the reaction (R)-pantothenate + ATP = (R)-4'-phosphopantothenate + ADP + H(+). It participates in cofactor biosynthesis; coenzyme A biosynthesis; CoA from (R)-pantothenate: step 1/5. Functionally, catalyzes the phosphorylation of pantothenate (Pan), the first step in CoA biosynthesis. This chain is Type III pantothenate kinase, found in Anaplasma marginale (strain Florida).